We begin with the raw amino-acid sequence, 182 residues long: UPF0690 protein C1orf52 (182 aa).

2 disordered regions span residues 1-67 (MAAE…RSVT) and 100-182 (WKSN…KKKK). The segment covering 23–32 (SDEEDNIEPE) has biased composition (acidic residues). A compositionally biased stretch (basic and acidic residues) spans 50–63 (NKAEKRLPGPDELF). Thr67 bears the Phosphothreonine mark. Tyr132 carries the post-translational modification Phosphotyrosine. Over residues 151 to 162 (EGEETLESDDEK) the composition is skewed to acidic residues. Position 158 is a phosphoserine (Ser158). Basic and acidic residues predominate over residues 172-182 (VEPGEPAKKKK).

The protein belongs to the UPF0690 family. Expressed in all tissues tested including heart, placenta, liver, skeletal muscle, kidney and pancreas. Weak expression in brain and lung.

In Homo sapiens (Human), this protein is UPF0690 protein C1orf52 (C1orf52).